A 125-amino-acid chain; its full sequence is Small ribosomal subunit protein eS6 (125 aa).

This sequence belongs to the eukaryotic ribosomal protein eS6 family. Part of the 30S ribosomal subunit.

This is Small ribosomal subunit protein eS6 from Thermococcus kodakarensis (strain ATCC BAA-918 / JCM 12380 / KOD1) (Pyrococcus kodakaraensis (strain KOD1)).